A 166-amino-acid polypeptide reads, in one-letter code: Chemoreceptor glutamine deamidase CheD (166 aa).

It belongs to the CheD family. As to quaternary structure, forms a complex with CheC.

It carries out the reaction L-glutaminyl-[protein] + H2O = L-glutamyl-[protein] + NH4(+). In terms of biological role, deamidates glutamine residues to glutamate on methyl-accepting chemotaxis receptors (MCPs). CheD-mediated MCP deamidation is required for productive communication of the conformational signals of the chemoreceptors to the CheA kinase. The sequence is that of Chemoreceptor glutamine deamidase CheD from Bacillus velezensis (strain DSM 23117 / BGSC 10A6 / LMG 26770 / FZB42) (Bacillus amyloliquefaciens subsp. plantarum).